A 946-amino-acid polypeptide reads, in one-letter code: Zinc finger CCCH-type antiviral protein 1 (946 aa).

The segment at 1–254 (MTDPEVFCFI…DRSKSRDRFH (254 aa)) is N-terminal domain. Positions 69-76 (RARVCRRK) match the Nuclear localization signal motif. C3H1-type zinc fingers lie at residues 73–86 (CRRKYCQRPCDSLH), 87–113 (LCKLNLLGRCHYAQSQRNLCKYSHDVL), 150–172 (CKSYKGEGRKQICGQPQPCERLH), and 173–194 (ICEHFTRGNCSYLNCLRSHNLM). Disordered stretches follow at residues 221–283 (NKHT…KDPL) and 302–354 (RAQL…AAGF). Residues 224 to 254 (TRRNPPSMRAPHPHRRGGAHRDRSKSRDRFH) form a binding to EXOSC5 region. Residues 242–257 (AHRDRSKSRDRFHHNS) are compositionally biased toward basic and acidic residues. Ser-257 carries the post-translational modification Phosphoserine. Ser-262 bears the Phosphoserine; by GSK3-beta mark. Ser-265, Ser-269, and Ser-273 each carry phosphoserine. Phosphothreonine is present on Thr-277. Positions 283–290 (LEDVSADV) match the Nuclear export signal motif. 2 positions are modified to phosphoserine: Ser-324 and Ser-350. Residues 412 to 413 (KR) carry the Nuclear localization signal motif. Ser-425 is subject to Phosphoserine. The interval 461 to 491 (NPAWPGTSTHNGPNGFSQIMDETPNVSKSSP) is disordered. The segment covering 466-477 (GTSTHNGPNGFS) has biased composition (polar residues). The residue at position 508 (Tyr-508) is a Phosphotyrosine. The interval 523–570 (GETTTPVQGSNRLPPSPLSSSTSHRVAASGSPGKSSTHASVSPASEPS) is disordered. Polar residues predominate over residues 524 to 533 (ETTTPVQGSN). A Phosphoserine modification is found at Ser-553. The span at 554–567 (PGKSSTHASVSPAS) shows a compositional bias: polar residues. A phosphoserine mark is found at Ser-583 and Ser-680. The WWE domain occupies 684-771 (FVEKTLNSVF…ASKTQRHVVR (88 aa)). A PARP catalytic domain is found at 805 to 946 (SPQRNASTVS…SLDSSGLQRK (142 aa)).

The protein belongs to the ARTD/PARP family. In terms of assembly, homodimer or homooligomer. Homooligomerization is essential for its antiviral activity. Interacts with EXOSC5. Interacts (via N-terminal domain) with DDX17 in an RNA-independent manner. Interacts with EXOSC3, EXOSC7, DCP2 and DCP1A. Interacts with PARN in an RNA-independent manner. Interacts with XRN1 in an RNA-dependent manner. Interacts (via N-terminal domain) with DHX30 (via N-terminus) in an RNA-independent manner. Isoform 2 interacts (via zinc-fingers) with RIGI in an RNA-dependent manner. Phosphorylation at Ser-273 is essential for sequential phosphorylation of Ser-269, Ser-265, Ser-262 and Ser-257 by GSK3-beta. Phosphorylation by GSK3-beta enhances its antiviral activity.

Its subcellular location is the cytoplasm. The protein resides in the nucleus. Its function is as follows. Antiviral protein which inhibits the replication of viruses by recruiting the cellular RNA degradation machineries to degrade the viral mRNAs. Binds to a ZAP-responsive element (ZRE) present in the target viral mRNA, recruits cellular poly(A)-specific ribonuclease PARN to remove the poly(A) tail, and the 3'-5' exoribonuclease complex exosome to degrade the RNA body from the 3'-end. It also recruits the decapping complex DCP1-DCP2 through RNA helicase p72 (DDX17) to remove the cap structure of the viral mRNA to initiate its degradation from the 5'-end. Its target viruses belong to families which include retroviridae: human immunodeficiency virus type 1 (HIV-1) and moloney and murine leukemia virus (MoMLV), filoviridae: ebola virus (EBOV) and marburg virus (MARV), togaviridae: sindbis virus (SINV) and Ross river virus (RRV). Specifically targets the multiply spliced but not unspliced or singly spliced HIV-1 mRNAs for degradation. Isoform 1 is a more potent viral inhibitor than isoform 2. Isoform 2 acts as a positive regulator of RIG-I signaling resulting in activation of the downstream effector IRF3 leading to the expression of type I IFNs and IFN stimulated genes (ISGs). The polypeptide is Zinc finger CCCH-type antiviral protein 1 (Zc3hav1) (Mus musculus (Mouse)).